The following is a 293-amino-acid chain: Excinuclease cho (293 aa).

Positions 33-108 constitute a GIY-YIG domain; sequence ALPGVYIFHS…IKEQQPLFNK (76 aa).

Its function is as follows. Incises the DNA at the 3' side of a lesion during nucleotide excision repair. Incises the DNA farther away from the lesion than UvrC. Not able to incise the 5' site of a lesion. When a lesion remains because UvrC is not able to induce the 3' incision, Cho incises the DNA. Then UvrC makes the 5' incision. The combined action of Cho and UvrC broadens the substrate range of nucleotide excision repair. In Salmonella typhimurium (strain LT2 / SGSC1412 / ATCC 700720), this protein is Excinuclease cho (cho).